The following is a 67-amino-acid chain: uncharacterized protein (67 aa).

This is an uncharacterized protein from Haloarcula hispanica (His1V).